The chain runs to 200 residues: Recombination protein RecR (200 aa).

The segment at 60-75 adopts a C4-type zinc-finger fold; sequence CVYCQALTEDDVCNIC. Residues 83-177 form the Toprim domain; sequence TKLCIIESML…KISRIGFGVP (95 aa).

It belongs to the RecR family.

In terms of biological role, may play a role in DNA repair. It seems to be involved in an RecBC-independent recombinational process of DNA repair. It may act with RecF and RecO. This chain is Recombination protein RecR, found in Francisella tularensis subsp. tularensis (strain WY96-3418).